The following is a 320-amino-acid chain: Aspartate carbamoyltransferase catalytic subunit (320 aa).

R68 and T69 together coordinate carbamoyl phosphate. K96 contributes to the L-aspartate binding site. 3 residues coordinate carbamoyl phosphate: R118, H148, and Q151. L-aspartate contacts are provided by R181 and R236. Carbamoyl phosphate is bound by residues G277 and P278.

Belongs to the aspartate/ornithine carbamoyltransferase superfamily. ATCase family. Heterododecamer (2C3:3R2) of six catalytic PyrB chains organized as two trimers (C3), and six regulatory PyrI chains organized as three dimers (R2).

It carries out the reaction carbamoyl phosphate + L-aspartate = N-carbamoyl-L-aspartate + phosphate + H(+). It participates in pyrimidine metabolism; UMP biosynthesis via de novo pathway; (S)-dihydroorotate from bicarbonate: step 2/3. Its function is as follows. Catalyzes the condensation of carbamoyl phosphate and aspartate to form carbamoyl aspartate and inorganic phosphate, the committed step in the de novo pyrimidine nucleotide biosynthesis pathway. This chain is Aspartate carbamoyltransferase catalytic subunit, found in Paracidovorax citrulli (strain AAC00-1) (Acidovorax citrulli).